A 188-amino-acid polypeptide reads, in one-letter code: Putative manganese efflux pump MntP (188 aa).

Helical transmembrane passes span 3–23 (LYAL…VALA), 35–55 (IAAT…AGWV), 63–83 (FISE…GLKM), 104–126 (WMTV…GLAF), 140–160 (MAAT…GVLF), and 167–187 (AGGL…LGLI).

Belongs to the MntP (TC 9.B.29) family.

It is found in the cell inner membrane. In terms of biological role, probably functions as a manganese efflux pump. This Neisseria gonorrhoeae (strain ATCC 700825 / FA 1090) protein is Putative manganese efflux pump MntP.